Reading from the N-terminus, the 238-residue chain is Orotidine 5'-phosphate decarboxylase (238 aa).

Residues Asp-10, Lys-32, 59–68 (DLKLHDIPNT), Thr-122, Arg-184, Gln-193, Gly-213, and Arg-214 each bind substrate. Lys-61 (proton donor) is an active-site residue.

It belongs to the OMP decarboxylase family. Type 1 subfamily. Homodimer.

It carries out the reaction orotidine 5'-phosphate + H(+) = UMP + CO2. The protein operates within pyrimidine metabolism; UMP biosynthesis via de novo pathway; UMP from orotate: step 2/2. Catalyzes the decarboxylation of orotidine 5'-monophosphate (OMP) to uridine 5'-monophosphate (UMP). The sequence is that of Orotidine 5'-phosphate decarboxylase from Bacillus cereus (strain AH820).